A 453-amino-acid polypeptide reads, in one-letter code: Ribosomal protein uS12 methylthiotransferase RimO (453 aa).

One can recognise an MTTase N-terminal domain in the interval 4–120; that stretch reads TSVHIVSLGC…IADHLRVLME (117 aa). Positions 13, 49, 83, 161, 165, and 168 each coordinate [4Fe-4S] cluster. Residues 147 to 377 enclose the Radical SAM core domain; that stretch reads STPPYSAYLK…MEEQAVISHE (231 aa). The TRAM domain occupies 380 to 450; the sequence is QTLVGSLQEV…DYDLFAEVIS (71 aa).

Belongs to the methylthiotransferase family. RimO subfamily. Requires [4Fe-4S] cluster as cofactor.

It localises to the cytoplasm. It carries out the reaction L-aspartate(89)-[ribosomal protein uS12]-hydrogen + (sulfur carrier)-SH + AH2 + 2 S-adenosyl-L-methionine = 3-methylsulfanyl-L-aspartate(89)-[ribosomal protein uS12]-hydrogen + (sulfur carrier)-H + 5'-deoxyadenosine + L-methionine + A + S-adenosyl-L-homocysteine + 2 H(+). Its function is as follows. Catalyzes the methylthiolation of an aspartic acid residue of ribosomal protein uS12. This is Ribosomal protein uS12 methylthiotransferase RimO from Syntrophus aciditrophicus (strain SB).